The following is a 294-amino-acid chain: Flavin-dependent thymidylate synthase (294 aa).

The 224-residue stretch at glycine 27–tyrosine 250 folds into the ThyX domain. FAD contacts are provided by residues threonine 73, arginine 96–arginine 98, and glutamate 104. Residues glutamine 93 to arginine 96, glutamate 104 to arginine 108, and arginine 189 contribute to the dUMP site. Residues arginine 96–serine 106 carry the ThyX motif motif. Residues asparagine 205–histidine 207 and histidine 211 each bind FAD. Arginine 216 contributes to the dUMP binding site. Residue arginine 216 is the Involved in ionization of N3 of dUMP, leading to its activation of the active site.

This sequence belongs to the thymidylate synthase ThyX family. In terms of assembly, homotetramer. Requires FAD as cofactor.

The enzyme catalyses dUMP + (6R)-5,10-methylene-5,6,7,8-tetrahydrofolate + NADPH + H(+) = dTMP + (6S)-5,6,7,8-tetrahydrofolate + NADP(+). Its pathway is pyrimidine metabolism; dTTP biosynthesis. Catalyzes the reductive methylation of 2'-deoxyuridine-5'-monophosphate (dUMP) to 2'-deoxythymidine-5'-monophosphate (dTMP) while utilizing 5,10-methylenetetrahydrofolate (mTHF) as the methyl donor, and NADPH and FADH(2) as the reductant. The polypeptide is Flavin-dependent thymidylate synthase (Rickettsia conorii (strain ATCC VR-613 / Malish 7)).